The primary structure comprises 632 residues: uncharacterized protein (632 aa).

The protein belongs to the MG032/MG096/MG288 family.

This is an uncharacterized protein from Mycoplasma pneumoniae (strain ATCC 29342 / M129 / Subtype 1) (Mycoplasmoides pneumoniae).